Consider the following 213-residue polypeptide: Protein GrpE (213 aa).

A compositionally biased stretch (basic and acidic residues) spans 1-23 (MSDEKKPEAETSESLQKREEKLA). Residues 1-43 (MSDEKKPEAETSESLQKREEKLAETLASEPAAQGEAEDAAAAG) form a disordered region. The span at 29 to 43 (EPAAQGEAEDAAAAG) shows a compositional bias: low complexity.

This sequence belongs to the GrpE family. As to quaternary structure, homodimer.

Its subcellular location is the cytoplasm. Its function is as follows. Participates actively in the response to hyperosmotic and heat shock by preventing the aggregation of stress-denatured proteins, in association with DnaK and GrpE. It is the nucleotide exchange factor for DnaK and may function as a thermosensor. Unfolded proteins bind initially to DnaJ; upon interaction with the DnaJ-bound protein, DnaK hydrolyzes its bound ATP, resulting in the formation of a stable complex. GrpE releases ADP from DnaK; ATP binding to DnaK triggers the release of the substrate protein, thus completing the reaction cycle. Several rounds of ATP-dependent interactions between DnaJ, DnaK and GrpE are required for fully efficient folding. The sequence is that of Protein GrpE from Parvibaculum lavamentivorans (strain DS-1 / DSM 13023 / NCIMB 13966).